A 314-amino-acid chain; its full sequence is Vacuolar membrane protein VL3_4134 (314 aa).

The segment at 32–60 (KPTSSVVSETSSKSLPSLTSSAFSTSSGA) is disordered. A helical transmembrane segment spans residues 93–113 (VYIAVGAVIGAIFISILIWWL). 3 positions are modified to phosphoserine: Ser148, Ser254, and Ser274. A disordered region spans residues 240–309 (EERKLNLNRP…PSMFLDDVLN (70 aa)). Residues 254-269 (SPERKEKKINSMEGYH) are compositionally biased toward basic and acidic residues.

It belongs to the PRM5 family.

The protein resides in the vacuole membrane. This chain is Vacuolar membrane protein VL3_4134, found in Saccharomyces cerevisiae (strain Zymaflore VL3) (Baker's yeast).